A 196-amino-acid chain; its full sequence is Adenylyl-sulfate kinase (196 aa).

31–38 (GLSGAGKS) contributes to the ATP binding site. The active-site Phosphoserine intermediate is serine 105.

Belongs to the APS kinase family.

It carries out the reaction adenosine 5'-phosphosulfate + ATP = 3'-phosphoadenylyl sulfate + ADP + H(+). The protein operates within sulfur metabolism; hydrogen sulfide biosynthesis; sulfite from sulfate: step 2/3. In terms of biological role, catalyzes the synthesis of activated sulfate. The protein is Adenylyl-sulfate kinase (cysC) of Pseudomonas aeruginosa (strain ATCC 15692 / DSM 22644 / CIP 104116 / JCM 14847 / LMG 12228 / 1C / PRS 101 / PAO1).